The following is a 2226-amino-acid chain: Rotatin (2226 aa).

A disordered region spans residues 295 to 346; the sequence is EARGPYHSPNPSPGSSSSRPSVVGRTGQRPRGDGQDWDAVSSSGSSSHTHVN. Positions 307-319 are enriched in low complexity; sequence PGSSSSRPSVVGR. The residue at position 311 (serine 311) is a Phosphoserine. An N6-acetyllysine modification is found at lysine 813.

Belongs to the rotatin family. As to quaternary structure, interacts with PPP1R35; this interaction allows the mutual recruitment to the centriole.

Its subcellular location is the cytoplasm. The protein localises to the cytoskeleton. It localises to the cilium basal body. In terms of biological role, involved in the genetic cascade that governs left-right specification. Required for correct asymmetric expression of NODAL, LEFTY and PITX2. This Mus musculus (Mouse) protein is Rotatin.